The chain runs to 588 residues: A-type ATP synthase subunit A 3 (588 aa).

Residue Gly-234 to Thr-241 coordinates ATP.

This sequence belongs to the ATPase alpha/beta chains family. Has multiple subunits with at least A(3), B(3), C, D, E, F, H, I and proteolipid K(x).

The protein localises to the cell membrane. The catalysed reaction is ATP + H2O + 4 H(+)(in) = ADP + phosphate + 5 H(+)(out). In terms of biological role, component of the A-type ATP synthase that produces ATP from ADP in the presence of a proton gradient across the membrane. The A chain is the catalytic subunit. This Methanospirillum hungatei JF-1 (strain ATCC 27890 / DSM 864 / NBRC 100397 / JF-1) protein is A-type ATP synthase subunit A 3.